The primary structure comprises 537 residues: Extracellular exo-inulinase (537 aa).

Residues 1 to 19 (MAPLSKALSVFMLMGITYA) form the signal peptide. The beta-D-fructose site is built by Asn40 and Asp41. Asp41 acts as the Nucleophile in catalysis. Residue Asn49 is glycosylated (N-linked (GlcNAc...) asparagine). Beta-D-fructose-binding residues include Gln57 and Trp65. An N-linked (GlcNAc...) asparagine glycan is attached at Asn67. A beta-D-fructose-binding site is contributed by Ser103. 2 N-linked (GlcNAc...) asparagine glycosylation sites follow: Asn111 and Asn112. Arg188, Asp189, and Glu241 together coordinate beta-D-fructose. Glu241 acts as the Proton donor/acceptor in catalysis. N-linked (GlcNAc...) asparagine glycosylation is found at Asn254 and Asn300. Trp335 contributes to the beta-D-fructose binding site. Asn398 and Asn430 each carry an N-linked (GlcNAc...) asparagine glycan.

Belongs to the glycosyl hydrolase 32 family.

The protein localises to the secreted. The enzyme catalyses Hydrolysis of terminal, non-reducing (2-&gt;1)- and (2-&gt;6)-linked beta-D-fructofuranose residues in fructans.. Functionally, exo-inulinase involved in utilization of the plant storage polymer inulin, consisting of fructooligosaccharides with a degree of polymerization (DP) value from 2 to 60. Splits off terminal fructose units successively from the non-reducing end of the inulin molecule, and also hydrolyzes levan, stachyose and raffinose. Hydrolyzes both beta-2,1- as well as beta-2,6-fructosyl linkages in fructooligosaccharides. This is Extracellular exo-inulinase from Aspergillus awamori (Black koji mold).